A 604-amino-acid polypeptide reads, in one-letter code: Beta-alanine transporter (604 aa).

The Cytoplasmic portion of the chain corresponds to 1 to 23; it reads MDFDEVLREVGSFGLYQKVIICS. A helical transmembrane segment spans residues 24–44; the sequence is VLLPAALPCAFHAYSQLFIAA. Over 45–151 the chain is Extracellular; that stretch reads TPQHFCRVPE…QEWNLVCDRS (107 aa). Residues N68 and N88 are each glycosylated (N-linked (GlcNAc...) asparagine). A helical transmembrane segment spans residues 152-172; that stretch reads FLVTLALVVFGVGGLLGNYVF. Residues 173–182 are Cytoplasmic-facing; the sequence is GYLVDLWGRR. A helical membrane pass occupies residues 183-203; it reads PSFYAYLLLEIIACAASAFAW. Residues 204–212 lie on the Extracellular side of the membrane; it reads NYYTWLGLR. A helical transmembrane segment spans residues 213 to 233; sequence FVVGLTVPAILASPYVLAIEL. Residues 234 to 243 lie on the Cytoplasmic side of the membrane; that stretch reads VGPERRVFCT. The helical transmembrane segment at 244–264 threads the bilayer; the sequence is IVSNIAYSLGLVVLAGVIYIV. Residues 265–268 lie on the Extracellular side of the membrane; the sequence is RDWR. A helical transmembrane segment spans residues 269–289; that stretch reads ELSLAVSMPLLMLFSCFFVLP. The Cytoplasmic segment spans residues 290–362; sequence ESPRWLMAVG…FRGPNMRRKT (73 aa). Residues 363–383 form a helical membrane-spanning segment; the sequence is LIITLIWFANTSVYVGLSYYA. Residues 384–390 lie on the Extracellular side of the membrane; sequence PALGGDE. A helical transmembrane segment spans residues 391-411; that stretch reads IWNFFLAGAVELPTYLLLWPG. Over 412-418 the chain is Cytoplasmic; sequence LSYFGRR. A helical transmembrane segment spans residues 419–439; that stretch reads WILFISMLVGGVACVATFLYP. Topologically, residues 440-442 are extracellular; sequence DIT. A helical transmembrane segment spans residues 443-463; the sequence is LLLYCVGKMGISSSFVVLPLM. The Cytoplasmic segment spans residues 464–473; that stretch reads ASELYPTVVR. Residues 474 to 494 traverse the membrane as a helical segment; it reads GLGMSFSSVISMVGPIVIPMI. Residues 495-501 are Extracellular-facing; the sequence is NHMGQQM. A helical membrane pass occupies residues 502–522; that stretch reads LVLPLIVMGALLILGGFASLL. Over 523 to 604 the chain is Cytoplasmic; it reads LPETRNRNLP…SICKNEMRTL (82 aa).

The protein belongs to the major facilitator (TC 2.A.1) superfamily. Organic cation transporter (TC 2.A.1.19) family. As to expression, expressed in the head and predominantly in the retinal pigment cells of the compound eye.

Its subcellular location is the cell membrane. Functionally, beta-alanine transporter required for the uptake of beta-alanine by the glia. Required for the recycling process of the neurotransmitter histamine in photoreceptor neurons of the compound eye and therefore for photoreceptor synaptic transmission. Following histamine release from photoreceptors and its uptake by glia, histamine is conjugated to beta-alanine by e/Ebony to form the inactive metabolite, carcinine. This Drosophila melanogaster (Fruit fly) protein is Beta-alanine transporter.